The following is an 801-amino-acid chain: Na(+)/H(+) antiporter subunit A1 (801 aa).

21 consecutive transmembrane segments (helical) span residues 4–25 (LHIA…YRFF), 30–49 (LGWF…LTLI), 79–101 (LGLL…SIGY), 108–127 (LGNF…GVVL), 131–153 (VIIL…SFWR), 166–188 (LIIT…IPTQ), 208–230 (FIFA…PFYI), 243–265 (SAYL…MTPI), 270–289 (QGWV…WASL), 302–324 (AFST…ISYH), 339–361 (AAIF…TGAV), 373–395 (LGGL…LSMA), 429–451 (YLFP…KFIM), 472–494 (ILML…FPGI), 526–548 (AFLS…SYWV), 589–611 (NNLV…SVPF), 621–641 (IRIF…LILF), 646–668 (LFSI…FFKA), 672–694 (ALTQ…YHLP), 707–729 (LTNA…IAYG), and 767–784 (LFES…YTMI).

It belongs to the CPA3 antiporters (TC 2.A.63) subunit A family. May form a heterooligomeric complex that consists of seven subunits: mnhA1, mnhB1, mnhC1, mnhD1, mnhE1, mnhF1 and mnhG1.

The protein resides in the cell membrane. With respect to regulation, na(+) extrusion is completely inhibited by the H(+) conductor carbonyl cyanide m-chlorophenylhydrazone (CCCP). Mnh complex is a Na(+)/H(+) antiporter involved in Na(+) excretion. This Staphylococcus aureus (strain MSSA476) protein is Na(+)/H(+) antiporter subunit A1 (mnhA1).